A 61-amino-acid chain; its full sequence is MLNILNLICICLNFALYSSSFFFTKLPEAYAFLNPIVDVMPVIPLFFFLLAFVWQAAVSFR.

Residues 1 to 24 (MLNILNLICICLNFALYSSSFFFT) constitute a propeptide that is removed on maturation. The chain crosses the membrane as a helical span at residues 40 to 60 (MPVIPLFFFLLAFVWQAAVSF).

This sequence belongs to the PsbK family. As to quaternary structure, PSII is composed of 1 copy each of membrane proteins PsbA, PsbB, PsbC, PsbD, PsbE, PsbF, PsbH, PsbI, PsbJ, PsbK, PsbL, PsbM, PsbT, PsbX, PsbY, PsbZ, Psb30/Ycf12, at least 3 peripheral proteins of the oxygen-evolving complex and a large number of cofactors. It forms dimeric complexes.

It is found in the plastid. The protein localises to the chloroplast thylakoid membrane. One of the components of the core complex of photosystem II (PSII). PSII is a light-driven water:plastoquinone oxidoreductase that uses light energy to abstract electrons from H(2)O, generating O(2) and a proton gradient subsequently used for ATP formation. It consists of a core antenna complex that captures photons, and an electron transfer chain that converts photonic excitation into a charge separation. The polypeptide is Photosystem II reaction center protein K (Populus alba (White poplar)).